The sequence spans 284 residues: 2-dehydro-3-deoxyphosphooctonate aldolase (284 aa).

The protein belongs to the KdsA family.

It is found in the cytoplasm. The catalysed reaction is D-arabinose 5-phosphate + phosphoenolpyruvate + H2O = 3-deoxy-alpha-D-manno-2-octulosonate-8-phosphate + phosphate. The protein operates within carbohydrate biosynthesis; 3-deoxy-D-manno-octulosonate biosynthesis; 3-deoxy-D-manno-octulosonate from D-ribulose 5-phosphate: step 2/3. It functions in the pathway bacterial outer membrane biogenesis; lipopolysaccharide biosynthesis. The polypeptide is 2-dehydro-3-deoxyphosphooctonate aldolase (Photobacterium profundum (strain SS9)).